A 195-amino-acid polypeptide reads, in one-letter code: ATP-dependent Clp protease proteolytic subunit (195 aa).

The active-site Nucleophile is the Ser-99. His-124 is an active-site residue.

The protein belongs to the peptidase S14 family. In terms of assembly, fourteen ClpP subunits assemble into 2 heptameric rings which stack back to back to give a disk-like structure with a central cavity, resembling the structure of eukaryotic proteasomes.

The protein localises to the cytoplasm. It catalyses the reaction Hydrolysis of proteins to small peptides in the presence of ATP and magnesium. alpha-casein is the usual test substrate. In the absence of ATP, only oligopeptides shorter than five residues are hydrolyzed (such as succinyl-Leu-Tyr-|-NHMec, and Leu-Tyr-Leu-|-Tyr-Trp, in which cleavage of the -Tyr-|-Leu- and -Tyr-|-Trp bonds also occurs).. Cleaves peptides in various proteins in a process that requires ATP hydrolysis. Has a chymotrypsin-like activity. Plays a major role in the degradation of misfolded proteins. The protein is ATP-dependent Clp protease proteolytic subunit of Caldicellulosiruptor saccharolyticus (strain ATCC 43494 / DSM 8903 / Tp8T 6331).